Reading from the N-terminus, the 608-residue chain is uncharacterized protein (608 aa).

The helical transmembrane segment at 4-24 (LIFMALLMSLLFIGTVFGYGD) threads the bilayer.

It to M.jannaschii MJ1394 and A.fulgidus AF2028.

The protein resides in the membrane. This is an uncharacterized protein from Methanocaldococcus jannaschii (strain ATCC 43067 / DSM 2661 / JAL-1 / JCM 10045 / NBRC 100440) (Methanococcus jannaschii).